The following is a 227-amino-acid chain: ATP phosphoribosyltransferase (227 aa).

The protein belongs to the ATP phosphoribosyltransferase family. Short subfamily. As to quaternary structure, heteromultimer composed of HisG and HisZ subunits.

The protein localises to the cytoplasm. It carries out the reaction 1-(5-phospho-beta-D-ribosyl)-ATP + diphosphate = 5-phospho-alpha-D-ribose 1-diphosphate + ATP. It functions in the pathway amino-acid biosynthesis; L-histidine biosynthesis; L-histidine from 5-phospho-alpha-D-ribose 1-diphosphate: step 1/9. Functionally, catalyzes the condensation of ATP and 5-phosphoribose 1-diphosphate to form N'-(5'-phosphoribosyl)-ATP (PR-ATP). Has a crucial role in the pathway because the rate of histidine biosynthesis seems to be controlled primarily by regulation of HisG enzymatic activity. In Nitrosospira multiformis (strain ATCC 25196 / NCIMB 11849 / C 71), this protein is ATP phosphoribosyltransferase.